Here is a 473-residue protein sequence, read N- to C-terminus: Pre-mRNA-splicing factor PRP46 (473 aa).

The segment covering 1-10 has biased composition (polar residues); sequence MSTSLETPSG. Disordered regions lie at residues 1-21 and 103-126; these read MSTSLETPSGASAGPSIVASG and GPNVKLIGGPEAEKASSSTPQAVA. WD repeat units follow at residues 180–219, 222–261, 264–303, 306–347, 349–388, 391–429, and 440–473; these read GHMGWVRAVAMDPGNQWFATGAGDRVIKIWDLASGELKLS, GHISTIRGLAVSDRHPYLFSCAEDKMVKCWDLETNKVIRH, GHFSGVYSLSVHPTLDVLVTGGRDASVRVWDMRTRANIFT, GHTS…NTLT, HKKSVRALAIHPTEYSFASASSGGNNIKKWKCPEGIFVNN, GHEAIINTLSINSENVLFSGADNGTLTLWDYKTGLPFQH, and DAEAGVFCSTFDKTGTRLITGGADKTIKVYSEQA.

The protein belongs to the WD repeat PRL1/PRL2 family. As to quaternary structure, associated with the spliceosome.

It localises to the cytoplasm. The protein resides in the nucleus. Involved in pre-mRNA splicing and required for cell cycle progression at G2/M. The sequence is that of Pre-mRNA-splicing factor PRP46 (PRP46) from Cryptococcus neoformans var. neoformans serotype D (strain JEC21 / ATCC MYA-565) (Filobasidiella neoformans).